Reading from the N-terminus, the 2004-residue chain is MLCCLVFKGLLSMDLLRFLLISPFALIKGLYRLSAYLLRLVGRLLRPVVGNLNWRAPQWMTKTANGLHCAFNRSEQWVAKHPKGISAAIVLLMAAASAAFYGYHWYLNRPQPIEPAPMVYQETSIRVSAPRTVNYQAQKPEAQPLSLNFMHSAAPITAMGQVVDQGISLTPAIEGEWKWATERTLVFTPKKAWPMGANYQITIDTEKLLAPQIKLNQTELNFTTPAFAYQLEKAEYYQDPQEAQKRSTIFHVQFNAPVDVASFEKQILLGLVEGKSKSEKKLNFSVVYDEKKLNAWIHSQPLMPMDKGGSVHLSINKGVNASVAATPTTQAQNKWVSVPNLYSLAVNSINATLVESDNNNGERALIIAISDAVKDKEIKNAVKAWLLPQHNFQAKESAKTSTDFYPWDMDDIDDNLLQQSTPLALTLNEAEQEYQPIFSFKFDAPSYRTLLIEVNNSLTSVGGYKMPEKIYQIVRVPDYPKTLRFMSQGSLLSMQGDKQISVAARNMTGMKLDIKRVIPSQLQHIVSFKSSEYSSAHFNRLSDEYFTEHFQYQTALNNDNPGEINYQGVDLSRYLANNPSARRGVFLLTLSAWDPEKRDNQQHSEEDYDEDQEWVGDSRFVVITDLGIITKQSQDRSRDVFVQSIHSGLPAADAKVSVVAKNGVVLLSQITDSKGHVHFPALDAFKNERQPVMFLVEKEGDVSFLPTRATYDRNLDFSRFDIDGEETPSDPRTLSSYLFSDRGVYRPGDRFNIGLITRTANWATALDGVPLRAEIRDPRDTLMSTLPITLDSSGFNELSYTTGENSPTGEWNVYLYLVGKNNETSMLLGHTTVNVKEFEPDRLKVQLQLTPERQQGWVKPQELQANINVQNLFGTPAQERRVTSRLILRPMYPSFAPFPDYLFYENRHNSDGFETELEEQTTDLQGMATIPLDLKSYADATYQLQLLSEAFEAGGGRSVAATARVLVSPYDSLVGVKADGDLSYINRDAVRKLNIIAVDPSLNKIALPDLSLSLIEQKYISVLTKQDSGVYKYQSRLKEQLVSEQPLQISPTGTDFTLVTQQPGDFILVVKDSQGQVLNRISYTVAGNANLTRSLDRNTELKLKLNQAEYLQGEEIEIAINAPYAGSGLITIEKDKVYSWQWFHSDTTSSVQRIRIPPAMEGNGYINVQFVRDVNSDEIFMSPLSYGVMPFKISTKARQAAIELASPSVIKPGEVLPIKVTTDSPQRVVVFAVDEGILQVARYRLKDPLDYFFRKRELSVQSAQILDLILPEFSKLMALTSAPGGDAGEGLDLHLNPFKRKQDKPVAYWSGITEVNGETTFNYPIPDYFNGKIRVMAISATPDRIGKVQTSTTVRDNFILTPNVPAMVAPGDEFDVTVGVSNNLQGLKGKAVDITVRLTPPPQLEVVGEAQHSLSLAEKRETLVSFRLRARSALGDAPLVFDASYGSQSSRRTVSTSVRPAMPFRTQSVMGRMEGNKHTVTNLRQMFDNYAQRQATASHSPLVLTQGLARYLADYPYYSSEQIVSRSIPLIMQSKHPEMDSALNQNEVRDQLKNMLRILSSRQNSTGAIGLWHASPTPDPFVTPYVVQFLLEAKSAGYSLPNDILEGANNALRLLAARPYDDLYSLRLRAFAVYLLTLQGEITTNTLASVQSTLQQLYPDSWQTDLSAIYLASSYRLLKMDDEANKLLQPTWKQLGKAYSKAWWTQNYFDPLVQDATRLYLITRHFPEKVSSIPPQALENMVLALRDEHYTTYSSAMSILALESYTSQVAAQQDTPETLQIIEISKSKGIDPNVISTLNGLFVQGDFTGEAKAIQFNNYASAPAWYVVNQSGYDLQPPKDAISNGLEISRSYTDEQGKPVTQVTLGQKVNVHLKIRANAKQGQNNLAIVDLLPGGFEVVQQTAPEPEFYDNQDDQDEETGSGWQSPLMVSGSSWYPDYSDIREDRVIIYGSASTDVKEFIYQIKSTNTGRFVVPPAYGEAMYDRNVQALSVGKGHILVVPPEAK.

Positions 1 to 27 (MLCCLVFKGLLSMDLLRFLLISPFALI) are cleaved as a signal peptide.

The protein belongs to the protease inhibitor I39 (alpha-2-macroglobulin) family. Bacterial alpha-2-macroglobulin subfamily.

The polypeptide is Alpha-2-macroglobulin homolog (Yersinia pestis).